The primary structure comprises 491 residues: Probable Xaa-Pro aminopeptidase AFLA_084750 (491 aa).

Mn(2+)-binding residues include Asp-271, Asp-282, Glu-419, and Glu-458.

It belongs to the peptidase M24B family. Requires Mn(2+) as cofactor.

The catalysed reaction is Release of any N-terminal amino acid, including proline, that is linked to proline, even from a dipeptide or tripeptide.. In terms of biological role, catalyzes the removal of a penultimate prolyl residue from the N-termini of peptides. The protein is Probable Xaa-Pro aminopeptidase AFLA_084750 of Aspergillus flavus (strain ATCC 200026 / FGSC A1120 / IAM 13836 / NRRL 3357 / JCM 12722 / SRRC 167).